Here is a 149-residue protein sequence, read N- to C-terminus: Transcription factor HY5-like (149 aa).

A disordered region spans residues 1-77 (MSLQRPNGNS…RRRGRNPVDK (77 aa)). The interval 23-36 (ESDEELLMVPDMEA) is interaction with COP1. S24 bears the Phosphoserine mark. The span at 55–64 (ELDQTQNGVS) shows a compositional bias: polar residues. Positions 78 to 141 (EYRSLKRLLR…TMLRKMLINT (64 aa)) constitute a bZIP domain. Positions 80-100 (RSLKRLLRNRVSAQQARERKK) are basic motif. Residues 106–134 (LESRANELQNNNDQLEEKISTLTNENTML) are leucine-zipper.

It belongs to the bZIP family. In terms of assembly, heterodimer; heterodimerizes with HY5 via the leucine-zipper domains. Interacts with COP1 WD40 domain. Interacts with BBX24/STO and BBX25/STH. In terms of processing, ubiquitinated by COP1. Ubiquitination takes place in darkness and leads to its subsequent degradation, thereby preventing the activation of photomorphogenesis signals.

The protein resides in the nucleus. Functionally, transcription factor that promotes photomorphogenesis in light. Acts downstream of the light receptor network and directly affects transcription of light-induced genes. Specifically involved in the blue light specific pathway, suggesting that it participates in transmission of cryptochromes (CRY1 and CRY2) signals to downstream responses. In darkness, its degradation prevents the activation of light-induced genes. The protein is Transcription factor HY5-like (HYH) of Arabidopsis thaliana (Mouse-ear cress).